A 51-amino-acid chain; its full sequence is Large ribosomal subunit protein bL33 (51 aa).

The protein belongs to the bacterial ribosomal protein bL33 family.

This Methylococcus capsulatus (strain ATCC 33009 / NCIMB 11132 / Bath) protein is Large ribosomal subunit protein bL33.